The sequence spans 468 residues: Ribulose bisphosphate carboxylase large chain (468 aa).

Residue Lys5 is modified to N6,N6,N6-trimethyllysine. Asn114 and Thr164 together coordinate substrate. The active-site Proton acceptor is Lys166. A substrate-binding site is contributed by Lys168. Residues Lys192, Asp194, and Glu195 each contribute to the Mg(2+) site. Lys192 bears the N6-carboxylysine mark. The active-site Proton acceptor is the His285. Substrate contacts are provided by Arg286, His318, and Ser370.

This sequence belongs to the RuBisCO large chain family. Type I subfamily. Heterohexadecamer of 8 large chains and 8 small chains; disulfide-linked. The disulfide link is formed within the large subunit homodimers. The cofactor is Mg(2+). The disulfide bond which can form in the large chain dimeric partners within the hexadecamer appears to be associated with oxidative stress and protein turnover.

Its subcellular location is the plastid. It localises to the chloroplast. The catalysed reaction is 2 (2R)-3-phosphoglycerate + 2 H(+) = D-ribulose 1,5-bisphosphate + CO2 + H2O. It carries out the reaction D-ribulose 1,5-bisphosphate + O2 = 2-phosphoglycolate + (2R)-3-phosphoglycerate + 2 H(+). Functionally, ruBisCO catalyzes two reactions: the carboxylation of D-ribulose 1,5-bisphosphate, the primary event in carbon dioxide fixation, as well as the oxidative fragmentation of the pentose substrate in the photorespiration process. Both reactions occur simultaneously and in competition at the same active site. The polypeptide is Ribulose bisphosphate carboxylase large chain (Anthocercis viscosa (Sticky tailflower)).